Reading from the N-terminus, the 591-residue chain is Potassium channel KAT4 (591 aa).

Topologically, residues 1–32 are cytoplasmic; that stretch reads MAARSELLRPAFGEASPSLGRFVINPHSCSYR. Residues 33–53 form a helical membrane-spanning segment; the sequence is WWHMFLIMLVLYSAWASPFEL. Residues 54-63 are Extracellular-facing; the sequence is SMEKAASIAL. A helical transmembrane segment spans residues 64–84; sequence VVTDLVVDVFFAIDIALSFFV. Residues 85-109 lie on the Cytoplasmic side of the membrane; it reads AYRDTSTGLLITDRRKITMRYLKRP. A helical transmembrane segment spans residues 110–130; sequence CFALDVASTIPLQIIYQLVTG. The Extracellular segment spans residues 131–137; that stretch reads KRQGLWG. A helical; Voltage-sensor membrane pass occupies residues 138–158; that stretch reads LLNLLRLWRLRRVSKLFARVE. Topologically, residues 159–172 are cytoplasmic; the sequence is KDIRFNYLWTRLIK. Residues 173–193 traverse the membrane as a helical segment; sequence LLCVTLFALHFAACIYLWMAF. The Extracellular segment spans residues 194–220; it reads NYKIKELTWIGSQIHSFEDRSVWFCYT. Residues 221-240 constitute an intramembrane region (pore-forming); sequence CAVYWSITTLATVGYGDLHA. Over 241 to 246 the chain is Extracellular; sequence TNIGEM. The helical transmembrane segment at 247 to 267 threads the bilayer; the sequence is LFSIAFMLFNMGLTSYIIGNI. The Cytoplasmic segment spans residues 268–591; that stretch reads TNLVVRETSN…IRDGDHLLFS (324 aa). 349–469 is a binding site for a nucleoside 3',5'-cyclic phosphate; the sequence is LFQGVSDSLI…YIVFSNFIQY (121 aa). A KHA domain is found at 521–591; the sequence is RVVIHEQLPN…IRDGDHLLFS (71 aa).

It belongs to the potassium channel family. Plant (TC 1.A.1.4) subfamily.

Its subcellular location is the membrane. Probable inward-rectifying potassium channel. Assuming opened or closed conformations in response to the voltage difference across the membrane, the channel is activated by hyperpolarization. This is Potassium channel KAT4 from Oryza sativa subsp. japonica (Rice).